A 573-amino-acid chain; its full sequence is MQKALSFLKPYSLLAGIALILMLTELAVELMQPLLIAKIIDDGILKQDLRHVWIWGTVMIGLTVLSFAAGMLNSFYAAHVSQSFSYDTRKGLFQKIQSFSYSTFGQFSSSSYITRLTNDVTQVQNMIFMSLRFMLRAPLMIAGGIVLSLAVNVKLGFFLLVTIPILILFLLWVLRKGGALFRSVQKRLDQVNTIMQENLIAIKLIKALLRGSHEVKRFIKANTRLMEKTVSAFQLVEFTMPVLMLLMNLCILLILWAGSYSITSGSTQVGDVVAIINYATRITGALSMFPFLIMIFTRAKASGDRIGEVLETEGDEREEGTISDRLSGRIEFQHVSFRYPEMDREALRNVSFSAKPRETIAILGATGSGKSTLFQLIPRLYQPDSGRIYIDEKPVQDIPAEGLRRQIGYVPQEVLLFSGTIKENIAWGKENASLDEIMDAAKLAQIHETILKLPNGYDTVLGQRGVNLSGGQKQRISIARALIRKPAILLLDDSTSALDLQTEAKLLEAISTYHCTTLIITQKITTAMKADQILLLEDGELIEKGTHSELLSESQLYKRIYESQFGREGSESC.

In terms of domain architecture, ABC transmembrane type-1 spans 15-298; sequence AGIALILMLT…FPFLIMIFTR (284 aa). Transmembrane regions (helical) follow at residues 17-37, 52-72, 127-147, 153-173, 238-258, and 275-295; these read IALI…LLIA, VWIW…AGML, IFMS…GIVL, VKLG…LLWV, FTMP…LWAG, and IINY…LIMI. The ABC transporter domain maps to 330–563; it reads IEFQHVSFRY…SQLYKRIYES (234 aa). Residue 364–371 coordinates ATP; the sequence is GATGSGKS.

It belongs to the ABC transporter superfamily.

The protein localises to the cell membrane. This is an uncharacterized protein from Bacillus subtilis (strain 168).